Here is a 75-residue protein sequence, read N- to C-terminus: U6-lycotoxin-Ls1e (75 aa).

The first 21 residues, 1 to 21 (MKLLLFTALVLVVISLIEVEA), serve as a signal peptide directing secretion. The propeptide occupies 22–25 (ENER).

The protein belongs to the neurotoxin 19 (CSTX) family. 06 (U6-Lctx) subfamily. Post-translationally, contains 4 disulfide bonds. Expressed by the venom gland.

It localises to the secreted. The chain is U6-lycotoxin-Ls1e from Lycosa singoriensis (Wolf spider).